Here is a 228-residue protein sequence, read N- to C-terminus: Ribonuclease HII (228 aa).

The RNase H type-2 domain maps to 11 to 202 (GPVAGVDEAG…VVAAAQLHGM (192 aa)). Residues Asp-17, Glu-18, and Asp-111 each coordinate a divalent metal cation.

Belongs to the RNase HII family. Requires Mn(2+) as cofactor. Mg(2+) serves as cofactor.

It is found in the cytoplasm. It carries out the reaction Endonucleolytic cleavage to 5'-phosphomonoester.. Its function is as follows. Endonuclease that specifically degrades the RNA of RNA-DNA hybrids. The protein is Ribonuclease HII of Saccharopolyspora erythraea (strain ATCC 11635 / DSM 40517 / JCM 4748 / NBRC 13426 / NCIMB 8594 / NRRL 2338).